A 55-amino-acid chain; its full sequence is Riparin-1.5 acid (55 aa).

The N-terminal stretch at 1–15 is a signal peptide; that stretch reads MKIIVFLAVLMLVSA. Positions 16–41 are excised as a propeptide; it reads QVCLVSAAEMEHSSDNELSSRDLVKR. The cysteines at positions 47 and 53 are disulfide-linked. Positions 54–55 are excised as a propeptide; that stretch reads NH.

As to expression, expressed by the skin glands.

Its subcellular location is the secreted. This Crinia riparia (Streambank froglet) protein is Riparin-1.5 acid.